The primary structure comprises 274 residues: Fatty-acid O-methyltransferase (274 aa).

This sequence belongs to the methyltransferase superfamily.

The enzyme catalyses a fatty acid + S-adenosyl-L-methionine = a fatty acid methyl ester + S-adenosyl-L-homocysteine. Its function is as follows. O-methyltransferase that modifies the hydroxy group of the fatty acids. Oleate is the most effective fatty acid acceptor. This is Fatty-acid O-methyltransferase (mtf2) from Mycolicibacterium smegmatis (strain ATCC 700084 / mc(2)155) (Mycobacterium smegmatis).